The chain runs to 68 residues: Palustrin-1c (68 aa).

The signal sequence occupies residues 1–22; it reads MFTMKKSLLLLFFLGTISLSLC. Residues 23–39 constitute a propeptide that is removed on maturation; the sequence is EEERGADEEEGDGEKLT. Cys-62 and Cys-68 are joined by a disulfide.

In terms of tissue distribution, expressed by the skin glands.

The protein resides in the secreted. Antimicrobial peptide. The chain is Palustrin-1c from Odorrana versabilis (Chinese bamboo leaf odorous frog).